Here is a 248-residue protein sequence, read N- to C-terminus: Probable transcriptional regulatory protein RPC_4807 (248 aa).

Residues 1–21 (MAGHSQFKNIMHRKGRQDAQK) form a disordered region.

The protein belongs to the TACO1 family.

It is found in the cytoplasm. The polypeptide is Probable transcriptional regulatory protein RPC_4807 (Rhodopseudomonas palustris (strain BisB18)).